The following is a 438-amino-acid chain: Trigger factor (438 aa).

In terms of domain architecture, PPIase FKBP-type spans 162–247 (GDIVTIDFEG…VKDIKVKELP (86 aa)).

The protein belongs to the FKBP-type PPIase family. Tig subfamily.

Its subcellular location is the cytoplasm. The enzyme catalyses [protein]-peptidylproline (omega=180) = [protein]-peptidylproline (omega=0). In terms of biological role, involved in protein export. Acts as a chaperone by maintaining the newly synthesized protein in an open conformation. Functions as a peptidyl-prolyl cis-trans isomerase. This Caldicellulosiruptor bescii (strain ATCC BAA-1888 / DSM 6725 / KCTC 15123 / Z-1320) (Anaerocellum thermophilum) protein is Trigger factor.